Here is a 157-residue protein sequence, read N- to C-terminus: Endoribonuclease YbeY (157 aa).

Residues His114, His118, and His124 each contribute to the Zn(2+) site.

The protein belongs to the endoribonuclease YbeY family. It depends on Zn(2+) as a cofactor.

Its subcellular location is the cytoplasm. In terms of biological role, single strand-specific metallo-endoribonuclease involved in late-stage 70S ribosome quality control and in maturation of the 3' terminus of the 16S rRNA. This chain is Endoribonuclease YbeY, found in Salmonella typhimurium (strain LT2 / SGSC1412 / ATCC 700720).